The following is a 314-amino-acid chain: Mevalonate kinase (314 aa).

Residue 103–109 (GLGTSAA) coordinates ATP. Asp150 acts as the Proton acceptor in catalysis.

Belongs to the GHMP kinase family. Mevalonate kinase subfamily. In terms of assembly, homodimer. The cofactor is Mg(2+).

The protein resides in the cytoplasm. It catalyses the reaction (R)-mevalonate + ATP = (R)-5-phosphomevalonate + ADP + H(+). It functions in the pathway isoprenoid biosynthesis; isopentenyl diphosphate biosynthesis via mevalonate pathway; isopentenyl diphosphate from (R)-mevalonate: step 1/3. Its function is as follows. Catalyzes the phosphorylation of (R)-mevalonate (MVA) to (R)-mevalonate 5-phosphate (MVAP). Functions in the mevalonate (MVA) pathway leading to isopentenyl diphosphate (IPP), a key precursor for the biosynthesis of isoprenoid compounds such as archaeal membrane lipids. This chain is Mevalonate kinase, found in Saccharolobus solfataricus (strain ATCC 35092 / DSM 1617 / JCM 11322 / P2) (Sulfolobus solfataricus).